Here is a 520-residue protein sequence, read N- to C-terminus: GMP synthase [glutamine-hydrolyzing] (520 aa).

Residues 8–202 (RLLIIDFGSQ…FVRLAGFTGD (195 aa)) enclose the Glutamine amidotransferase type-1 domain. Residue cysteine 86 is the Nucleophile of the active site. Catalysis depends on residues histidine 177 and glutamate 179. The region spanning 203–395 (WTMDAYREQA…LGLPASFIGR (193 aa)) is the GMPS ATP-PPase domain. Residue 230 to 236 (SGGVDSS) participates in ATP binding.

As to quaternary structure, homodimer.

The enzyme catalyses XMP + L-glutamine + ATP + H2O = GMP + L-glutamate + AMP + diphosphate + 2 H(+). It functions in the pathway purine metabolism; GMP biosynthesis; GMP from XMP (L-Gln route): step 1/1. Catalyzes the synthesis of GMP from XMP. The polypeptide is GMP synthase [glutamine-hydrolyzing] (Dinoroseobacter shibae (strain DSM 16493 / NCIMB 14021 / DFL 12)).